Consider the following 121-residue polypeptide: Large ribosomal subunit protein uL14 (121 aa).

The protein belongs to the universal ribosomal protein uL14 family. As to quaternary structure, part of the 50S ribosomal subunit. Forms a cluster with proteins L3 and L19. In the 70S ribosome, L14 and L19 interact and together make contacts with the 16S rRNA in bridges B5 and B8.

Functionally, binds to 23S rRNA. Forms part of two intersubunit bridges in the 70S ribosome. This is Large ribosomal subunit protein uL14 from Prochlorococcus marinus (strain MIT 9313).